A 233-amino-acid polypeptide reads, in one-letter code: Small ribosomal subunit protein uS2 (233 aa).

Belongs to the universal ribosomal protein uS2 family.

The chain is Small ribosomal subunit protein uS2 from Clostridium beijerinckii (strain ATCC 51743 / NCIMB 8052) (Clostridium acetobutylicum).